An 86-amino-acid polypeptide reads, in one-letter code: MVLSTTVCRRIRRKAPCAFLKRTLKQKKPRLSLEKRCDLLIHLNCLLFVQKLAEESRTNACESKSGVIKKDHVQAAAKVILKKSRG.

This sequence belongs to the CENP-W/WIP1 family. As to quaternary structure, heterodimer with CENPT; this dimer coassembles with CENPS-CENPX heterodimers at centromeres to form the tetrameric CENP-T-W-S-X complex, which is a subcomplex of the large constitutive centromere-associated network (CCAN, also known as the interphase centromere complex or ICEN). Interacts with NPM1.

It localises to the nucleus. The protein localises to the chromosome. The protein resides in the centromere. It is found in the kinetochore. Its subcellular location is the nucleus matrix. It localises to the nucleolus. Component of the CENPA-NAC (nucleosome-associated) complex, a complex that plays a central role in assembly of kinetochore proteins, mitotic progression and chromosome segregation. The CENPA-NAC complex recruits the CENPA-CAD (nucleosome distal) complex and may be involved in incorporation of newly synthesized CENPA into centromeres. Part of a nucleosome-associated complex that binds specifically to histone H3-containing nucleosomes at the centromere, as opposed to nucleosomes containing CENPA. Component of the heterotetrameric CENP-T-W-S-X complex that binds and supercoils DNA, and plays an important role in kinetochore assembly. CENPW has a fundamental role in kinetochore assembly and function. It is one of the inner kinetochore proteins, with most further proteins binding downstream. Required for normal chromosome organization and normal progress through mitosis. The protein is Centromere protein W (Cenpw) of Rattus norvegicus (Rat).